Here is a 487-residue protein sequence, read N- to C-terminus: MPN domain-containing protein (487 aa).

The interval 1–55 (MAAPESLSPGATAEEAPEEDEDDAEAEDPERGTGSGGRSGSLGGSGGGTAGPGMA) is disordered. Alanine 2 is subject to N-acetylalanine. A Phosphoserine modification is found at serine 8. A compositionally biased stretch (acidic residues) spans 15 to 28 (EAPEEDEDDAEAED). Residues 33–55 (TGSGGRSGSLGGSGGGTAGPGMA) are compositionally biased toward gly residues. One can recognise an RAMA domain in the interval 61–156 (TRRAVTLRVL…KYKAAWLRRH (96 aa)). The DNA site is built by serine 113, serine 115, and tryptophan 135. The interval 163–217 (ATADESPTSEGEEEELLLEEEEEDVLAGVSSEDKGHRPPGKGSLEPEATPPGKRM) is disordered. A phosphoserine mark is found at serine 168 and serine 171. Positions 172-187 (EGEEEELLLEEEEEDV) are enriched in acidic residues. Residues 258–393 (VAVSSNVLFL…PESKICPFWV (136 aa)) enclose the MPN domain. Histidine 335, histidine 337, and aspartate 348 together coordinate Zn(2+). The JAMM motif motif lies at 335 to 348 (HSHPHSPAVPSLQD).

The protein belongs to the peptidase M67 family. Monomer. Mainly monomoric, but when binds to dsDNA, forms homotetramer assembled into two homodimers. May interact with histones; this interaction is facilitated by. Post-translationally, degraded following binding to N(6)-methyladenosine methylated DNA (m6A).

In terms of biological role, probable protease. Acts as a sensor of N(6)-methyladenosine methylation on DNA (m6A): recognizes and binds m6A DNA, leading to its degradation. Binds only double strand DNA (dsDNA) in a sequence-independent manner. The sequence is that of MPN domain-containing protein from Mus musculus (Mouse).